We begin with the raw amino-acid sequence, 436 residues long: GTPase Der (436 aa).

2 consecutive EngA-type G domains span residues 4 to 167 (PVVA…PKEE) and 176 to 351 (VKFS…DNHS). GTP is bound by residues 10–17 (GRPNVGKS), 57–61 (DTGGI), 119–122 (NKVD), 182–189 (GRPNVGKS), 229–233 (DTAGM), and 294–297 (NKWD). The 85-residue stretch at 352–436 (LRVQSSMLND…PIRVIARKRK (85 aa)) folds into the KH-like domain.

It belongs to the TRAFAC class TrmE-Era-EngA-EngB-Septin-like GTPase superfamily. EngA (Der) GTPase family. As to quaternary structure, associates with the 50S ribosomal subunit.

GTPase that plays an essential role in the late steps of ribosome biogenesis. The polypeptide is GTPase Der (Listeria innocua serovar 6a (strain ATCC BAA-680 / CLIP 11262)).